The sequence spans 496 residues: Glutamate--tRNA ligase 2 (496 aa).

The 'HIGH' region signature appears at 13–23 (PSPTGRLHVGG). Positions 255–259 (KLSKR) match the 'KMSKS' region motif. ATP is bound at residue Lys-258.

It belongs to the class-I aminoacyl-tRNA synthetase family. Glutamate--tRNA ligase type 1 subfamily. Monomer.

It is found in the cytoplasm. It catalyses the reaction tRNA(Glu) + L-glutamate + ATP = L-glutamyl-tRNA(Glu) + AMP + diphosphate. In terms of biological role, catalyzes the attachment of glutamate to tRNA(Glu) in a two-step reaction: glutamate is first activated by ATP to form Glu-AMP and then transferred to the acceptor end of tRNA(Glu). The protein is Glutamate--tRNA ligase 2 of Rubrobacter xylanophilus (strain DSM 9941 / JCM 11954 / NBRC 16129 / PRD-1).